The sequence spans 203 residues: ADP-ribosylation factor-like protein 6-interacting protein 1 (203 aa).

Over 1–41 (MAEGDNRSTNLLAAETASLEEQLQGWGEVMLMADKVLRWER) the chain is Cytoplasmic. The helical transmembrane segment at 42–62 (AWFPPAIMGVVSLVFLIIYYL) threads the bilayer. The Lumenal portion of the chain corresponds to 63 to 65 (DPS). The chain crosses the membrane as a helical span at residues 66–86 (VLSGVSCFVMFLCLADYLVPI). The Cytoplasmic portion of the chain corresponds to 87–133 (LAPRIFGSNKWTTEQQQRFHEICSNLVKTRRRAVGWWKRLFTLKEEK). A helical membrane pass occupies residues 134-175 (PKMYFMTMIVSLAAVAWVGQQVHNLLLTYLIVTSLLLLPGLN). Residues 176–203 (QHGIILKYIGMAKREINKLLKQKEKKNE) are Lumenal-facing.

Belongs to the ARL6ip family. As to quaternary structure, homooligomer. Heterodimer with ARL6IP5. Interacts with ARL6. Interacts with TMEM33. Interacts with ATL1. Expressed in all hematopoietic cell lineages, but the highest level of expression is found in early myeloid progenitor cells. Expressed in brain, bone marrow, thymus and lung. Expressed at low level in liver, kidney and spleen. Not detected in heart.

The protein localises to the endomembrane system. It is found in the endoplasmic reticulum membrane. Its subcellular location is the endoplasmic reticulum. Positively regulates SLC1A1/EAAC1-mediated glutamate transport by increasing its affinity for glutamate in a PKC activity-dependent manner. Promotes the catalytic efficiency of SLC1A1/EAAC1 probably by reducing its interaction with ARL6IP5, a negative regulator of SLC1A1/EAAC1-mediated glutamate transport. Plays a role in the formation and stabilization of endoplasmic reticulum tubules. Negatively regulates apoptosis, possibly by modulating the activity of caspase-9 (CASP9). Inhibits cleavage of CASP9-dependent substrates and downstream markers of apoptosis but not CASP9 itself. May be involved in protein transport, membrane trafficking, or cell signaling during hematopoietic maturation. The chain is ADP-ribosylation factor-like protein 6-interacting protein 1 (ARL6IP1) from Homo sapiens (Human).